Reading from the N-terminus, the 122-residue chain is Holo-[acyl-carrier-protein] synthase (122 aa).

Residues aspartate 9 and glutamate 58 each contribute to the Mg(2+) site.

Belongs to the P-Pant transferase superfamily. AcpS family. Requires Mg(2+) as cofactor.

The protein localises to the cytoplasm. The enzyme catalyses apo-[ACP] + CoA = holo-[ACP] + adenosine 3',5'-bisphosphate + H(+). Its function is as follows. Transfers the 4'-phosphopantetheine moiety from coenzyme A to a Ser of acyl-carrier-protein. The chain is Holo-[acyl-carrier-protein] synthase from Chlamydia pneumoniae (Chlamydophila pneumoniae).